The chain runs to 312 residues: tRNA uridine(34) hydroxylase (312 aa).

Residues 123 to 217 (SDPEVLLIDT…YLEEVPQEQS (95 aa)) enclose the Rhodanese domain. The active-site Cysteine persulfide intermediate is the C177. Basic and acidic residues predominate over residues 282–293 (ARERQKQIELAR). Residues 282-312 (ARERQKQIELARQRNQPHPLGRDPRQSTLEN) are disordered.

This sequence belongs to the TrhO family.

It catalyses the reaction uridine(34) in tRNA + AH2 + O2 = 5-hydroxyuridine(34) in tRNA + A + H2O. Functionally, catalyzes oxygen-dependent 5-hydroxyuridine (ho5U) modification at position 34 in tRNAs. The protein is tRNA uridine(34) hydroxylase of Pseudomonas paraeruginosa (strain DSM 24068 / PA7) (Pseudomonas aeruginosa (strain PA7)).